The chain runs to 356 residues: Viral cathepsin (356 aa).

The signal sequence occupies residues 1 to 40; sequence MYANALVCLNPSFIKLQFHIVCTMNIIGIVTLALCSAASA. The propeptide at 41–144 is activation peptide; that stretch reads ADEGAAYNLQ…IILNQPPDKG (104 aa). 3 cysteine pairs are disulfide-bonded: Cys-165–Cys-206, Cys-199–Cys-239, and Cys-295–Cys-343. The active site involves Cys-168. Catalysis depends on residues His-302 and Asn-322.

Belongs to the peptidase C1 family. Post-translationally, synthesized as an inactive proenzyme and activated by proteolytic removal of the inhibitory propeptide.

The catalysed reaction is Endopeptidase of broad specificity, hydrolyzing substrates of both cathepsin L and cathepsin B.. Its function is as follows. Cysteine protease that plays an essential role in host liquefaction to facilitate horizontal transmission of the virus. May participate in the degradation of foreign protein expressed by the baculovirus system. The sequence is that of Viral cathepsin (VCATH) from Lepidoptera (butterflies and moths).